A 553-amino-acid polypeptide reads, in one-letter code: Adenine deaminase (553 aa).

Belongs to the metallo-dependent hydrolases superfamily. Adenine deaminase family. Mn(2+) serves as cofactor.

The catalysed reaction is adenine + H2O + H(+) = hypoxanthine + NH4(+). This chain is Adenine deaminase, found in Methanosarcina acetivorans (strain ATCC 35395 / DSM 2834 / JCM 12185 / C2A).